The following is a 459-amino-acid chain: Cysteine--tRNA ligase (459 aa).

Cys28 lines the Zn(2+) pocket. A 'HIGH' region motif is present at residues 30-40 (VTVYDLCHIGH). Zn(2+)-binding residues include Cys209, His234, and Glu238. A 'KMSKS' region motif is present at residues 266–270 (KMSKS). Lys269 is an ATP binding site.

This sequence belongs to the class-I aminoacyl-tRNA synthetase family. As to quaternary structure, monomer. It depends on Zn(2+) as a cofactor.

Its subcellular location is the cytoplasm. The enzyme catalyses tRNA(Cys) + L-cysteine + ATP = L-cysteinyl-tRNA(Cys) + AMP + diphosphate. The protein is Cysteine--tRNA ligase of Histophilus somni (strain 129Pt) (Haemophilus somnus).